A 784-amino-acid chain; its full sequence is Endonuclease MutS2 (784 aa).

ATP is bound at residue G335–T342. The region spanning L709 to K784 is the Smr domain.

The protein belongs to the DNA mismatch repair MutS family. MutS2 subfamily. As to quaternary structure, homodimer. Binds to stalled ribosomes, contacting rRNA.

Functionally, endonuclease that is involved in the suppression of homologous recombination and thus may have a key role in the control of bacterial genetic diversity. In terms of biological role, acts as a ribosome collision sensor, splitting the ribosome into its 2 subunits. Detects stalled/collided 70S ribosomes which it binds and splits by an ATP-hydrolysis driven conformational change. Acts upstream of the ribosome quality control system (RQC), a ribosome-associated complex that mediates the extraction of incompletely synthesized nascent chains from stalled ribosomes and their subsequent degradation. Probably generates substrates for RQC. In Geobacillus kaustophilus (strain HTA426), this protein is Endonuclease MutS2.